A 2455-amino-acid chain; its full sequence is Ectopic P granules protein 5 homolog (2455 aa).

The interval 1–42 is disordered; sequence MATLEKPKKEKSKKSRNRVPIEKEEEEPAELSTSEEQRPAEN. Ser-44 is subject to Phosphoserine. Positions 77–105 are disordered; the sequence is VTSQEPEGTQEPTETEAQPSAPSAPPSTT. Low complexity predominate over residues 80–97; that stretch reads QEPEGTQEPTETEAQPSA. Ser-467 bears the Phosphoserine mark.

It belongs to the EPG5 family.

The protein localises to the cytoplasm. It is found in the perinuclear region. It localises to the lysosome. Its function is as follows. Involved in autophagy. Plays a role in late steps of autophagy. The sequence is that of Ectopic P granules protein 5 homolog from Drosophila melanogaster (Fruit fly).